We begin with the raw amino-acid sequence, 332 residues long: Geranylgeranyl pyrophosphate synthase 2 (332 aa).

Isopentenyl diphosphate-binding residues include Lys55, Arg58, and His87. Asp94 and Asp98 together coordinate Mg(2+). Arg103 serves as a coordination point for dimethylallyl diphosphate. Position 104 (Arg104) interacts with isopentenyl diphosphate. Residues Lys181, Thr182, and Gln218 each coordinate dimethylallyl diphosphate. Asp221 is a Mg(2+) binding site. Dimethylallyl diphosphate contacts are provided by Asn225, Lys235, and Lys245.

It belongs to the FPP/GGPP synthase family. The cofactor is Mg(2+).

It catalyses the reaction isopentenyl diphosphate + dimethylallyl diphosphate = (2E)-geranyl diphosphate + diphosphate. The catalysed reaction is isopentenyl diphosphate + (2E)-geranyl diphosphate = (2E,6E)-farnesyl diphosphate + diphosphate. The enzyme catalyses isopentenyl diphosphate + (2E,6E)-farnesyl diphosphate = (2E,6E,10E)-geranylgeranyl diphosphate + diphosphate. Its function is as follows. Geranylgeranyl pyrophosphate synthase; part of the gene cluster 3 that mediates the biosynthesis of an isoprenoid secondary metabolite. This is Geranylgeranyl pyrophosphate synthase 2 (GGS2) from Zymoseptoria tritici (strain CBS 115943 / IPO323) (Speckled leaf blotch fungus).